The sequence spans 142 residues: Hemoglobin subunit alpha-A (142 aa).

A Globin domain is found at 2–142 (VLSAADKNNV…VGTVLTAKYR (141 aa)). Histidine 59 is a binding site for O2. Histidine 88 contributes to the heme b binding site.

The protein belongs to the globin family. In terms of assembly, heterotetramer of two alpha chains and two beta chains. In terms of tissue distribution, red blood cells.

Functionally, involved in oxygen transport from the lung to the various peripheral tissues. The protein is Hemoglobin subunit alpha-A (HBAA) of Gallus gallus (Chicken).